Reading from the N-terminus, the 68-residue chain is Small ribosomal subunit protein bS21 (68 aa).

The interval 36-68 is disordered; sequence YEKPSEKRARERAAAVRRSRKLERKRAERDGIR. Residues 37 to 49 are compositionally biased toward basic and acidic residues; sequence EKPSEKRARERAA. Residues 50–59 show a composition bias toward basic residues; it reads AVRRSRKLER.

The protein belongs to the bacterial ribosomal protein bS21 family.

The protein is Small ribosomal subunit protein bS21 of Zymomonas mobilis subsp. mobilis (strain ATCC 31821 / ZM4 / CP4).